A 503-amino-acid polypeptide reads, in one-letter code: Probable cytosol aminopeptidase (503 aa).

Mn(2+)-binding residues include Lys-270 and Asp-275. The active site involves Lys-282. Residues Asp-293, Asp-352, and Glu-354 each coordinate Mn(2+). Residue Arg-356 is part of the active site.

The protein belongs to the peptidase M17 family. The cofactor is Mn(2+).

Its subcellular location is the cytoplasm. It carries out the reaction Release of an N-terminal amino acid, Xaa-|-Yaa-, in which Xaa is preferably Leu, but may be other amino acids including Pro although not Arg or Lys, and Yaa may be Pro. Amino acid amides and methyl esters are also readily hydrolyzed, but rates on arylamides are exceedingly low.. The catalysed reaction is Release of an N-terminal amino acid, preferentially leucine, but not glutamic or aspartic acids.. In terms of biological role, presumably involved in the processing and regular turnover of intracellular proteins. Catalyzes the removal of unsubstituted N-terminal amino acids from various peptides. This chain is Probable cytosol aminopeptidase, found in Shigella boydii serotype 4 (strain Sb227).